Consider the following 149-residue polypeptide: Large ribosomal subunit protein bL9 (149 aa).

This sequence belongs to the bacterial ribosomal protein bL9 family.

In terms of biological role, binds to the 23S rRNA. This chain is Large ribosomal subunit protein bL9, found in Proteus mirabilis (strain HI4320).